Here is a 556-residue protein sequence, read N- to C-terminus: Butanoate--CoA ligase AAE1 (556 aa).

The Microbody targeting signal motif lies at 554-556; that stretch reads SKL.

The protein belongs to the ATP-dependent AMP-binding enzyme family. Expressed in roots, leaves, stems, flowers and developing seeds.

The protein resides in the peroxisome. The enzyme catalyses butanoate + ATP + CoA = butanoyl-CoA + AMP + diphosphate. It catalyses the reaction hexanoate + ATP + CoA = hexanoyl-CoA + AMP + diphosphate. It carries out the reaction pentanoate + ATP + CoA = pentanoyl-CoA + AMP + diphosphate. The catalysed reaction is 4-methylpentanoate + ATP + CoA = 4-methylpentanoyl-CoA + AMP + diphosphate. In terms of biological role, catalyzes the ligation of CoA on butanoate to produce butanoyl-CoA. Can also use hexanoate, pentanoate and 4-methylpentanoate as substrates with a lower efficiency. This is Butanoate--CoA ligase AAE1 from Arabidopsis thaliana (Mouse-ear cress).